The following is a 238-amino-acid chain: MNSNANNTPIAIGISQVFPCSYLDGQQEQLLVIQEETLDPILFERLLAIGFRRSGSAIYKPRCPRCSACQPIRVPIQEFVPSKRQKRTLAHNRDLTWRITTEHTETQYALYEKYIRERHFDGPMYPPSKAQYEQFLFCHWLPPTFIEVYDDNRLVAVAVTDTLPNSFSAIYSYFDPDEERRSLGVLLILLQCRLAKLQGKAFLYLGYQIDANRKMSYKRLYRPYQILTHQGWEYSQVC.

The protein belongs to the R-transferase family. Bpt subfamily.

It is found in the cytoplasm. It catalyses the reaction N-terminal L-glutamyl-[protein] + L-leucyl-tRNA(Leu) = N-terminal L-leucyl-L-glutamyl-[protein] + tRNA(Leu) + H(+). The enzyme catalyses N-terminal L-aspartyl-[protein] + L-leucyl-tRNA(Leu) = N-terminal L-leucyl-L-aspartyl-[protein] + tRNA(Leu) + H(+). Functionally, functions in the N-end rule pathway of protein degradation where it conjugates Leu from its aminoacyl-tRNA to the N-termini of proteins containing an N-terminal aspartate or glutamate. In Shewanella oneidensis (strain ATCC 700550 / JCM 31522 / CIP 106686 / LMG 19005 / NCIMB 14063 / MR-1), this protein is Aspartate/glutamate leucyltransferase.